A 130-amino-acid chain; its full sequence is Succinate dehydrogenase assembly factor 3, mitochondrial (130 aa).

The transit peptide at 1 to 8 (MRPSLLRL) directs the protein to the mitochondrion.

This sequence belongs to the complex I LYR family. SDHAF3 subfamily. Interacts with the iron-sulfur protein subunit within the SDH catalytic dimer.

Its subcellular location is the mitochondrion matrix. Plays an essential role in the assembly of succinate dehydrogenase (SDH), an enzyme complex (also referred to as respiratory complex II) that is a component of both the tricarboxylic acid (TCA) cycle and the mitochondrial electron transport chain, and which couples the oxidation of succinate to fumarate with the reduction of ubiquinone (coenzyme Q) to ubiquinol. Promotes maturation of the iron-sulfur protein subunit of the SDH catalytic dimer, protecting it from the deleterious effects of oxidants. May act together with SDHAF1. This Gibberella zeae (strain ATCC MYA-4620 / CBS 123657 / FGSC 9075 / NRRL 31084 / PH-1) (Wheat head blight fungus) protein is Succinate dehydrogenase assembly factor 3, mitochondrial.